The chain runs to 25 residues: Hemocyanin subunit 2 (25 aa).

Belongs to the tyrosinase family. Hemocyanin subfamily. In terms of tissue distribution, hemolymph.

It localises to the secreted. The protein localises to the extracellular space. Hemocyanins are copper-containing oxygen carriers occurring freely dissolved in the hemolymph of many mollusks and arthropods. The polypeptide is Hemocyanin subunit 2 (Carcinus maenas (Common shore crab)).